Here is a 133-residue protein sequence, read N- to C-terminus: Holo-[acyl-carrier-protein] synthase (133 aa).

2 residues coordinate Mg(2+): D8 and E56.

It belongs to the P-Pant transferase superfamily. AcpS family. Mg(2+) is required as a cofactor.

It is found in the cytoplasm. The catalysed reaction is apo-[ACP] + CoA = holo-[ACP] + adenosine 3',5'-bisphosphate + H(+). Its function is as follows. Transfers the 4'-phosphopantetheine moiety from coenzyme A to a Ser of acyl-carrier-protein. The chain is Holo-[acyl-carrier-protein] synthase from Clostridium perfringens (strain SM101 / Type A).